We begin with the raw amino-acid sequence, 1494 residues long: ABC multidrug transporter atrG (1494 aa).

Positions 1 to 11 are enriched in polar residues; the sequence is MSLLGTINPNL. Disordered regions lie at residues 1 to 48 and 84 to 105; these read MSLL…RTSD and FSVS…TLNP. Asn41 carries N-linked (GlcNAc...) asparagine glycosylation. 2 N-linked (GlcNAc...) asparagine glycosylation sites follow: Asn141 and Asn340. Positions 162-416 constitute an ABC transporter 1 domain; it reads LQVGALFRAV…FTTMGFECPE (255 aa). The next 2 membrane-spanning stretches (helical) occupy residues 527-547 and 561-581; these read LTMS…SVFY and ALLF…ILTL. N-linked (GlcNAc...) asparagine glycosylation is present at Asn622. 3 helical membrane-spanning segments follow: residues 636 to 656, 669 to 689, and 778 to 798; these read GPFF…SMLF, ALVP…FTIP, and GIMF…TEYI. Asn835 carries N-linked (GlcNAc...) asparagine glycosylation. An ABC transporter 2 domain is found at 852–1095; it reads FHWQDVCYDI…LASYFERNGA (244 aa). 888 to 895 contacts ATP; the sequence is GVSGAGKT. 5 helical membrane passes run 1191–1211, 1227–1247, 1276–1296, 1312–1332, and 1351–1371; these read YIYS…FSFF, IFML…NFVT, LPWN…PIGL, LMWL…HMMI, and LCLI…FWIF. Asn1410 and Asn1432 each carry an N-linked (GlcNAc...) asparagine glycan. The helical transmembrane segment at 1463–1483 threads the bilayer; sequence FGIMWAFIVFNIAAAVFIYWL.

The protein belongs to the ABC transporter superfamily. ABCG family. PDR (TC 3.A.1.205) subfamily.

The protein localises to the cell membrane. It carries out the reaction (R)-miconazole(in) + ATP + H2O = (R)-miconazole(out) + ADP + phosphate + H(+). Functionally, pleiotropic ABC efflux transporter involved in the basal level of azole susceptibility. Confers resistance to miconazole and clotrimazole. The sequence is that of ABC multidrug transporter atrG from Aspergillus oryzae (strain ATCC 42149 / RIB 40) (Yellow koji mold).